The chain runs to 153 residues: MLDELRAEKNFPSKPYDSLKNKSEFDRVYQRGFKKHNSFFSLFVLDASKEPSHFKNPFFCRLKDTEKSCLLGLSVSKKVGNAVKRNLIKRRLRSLVLKHASLCQGFALVFVPKKDCERLDFLTLEKHFLEMLISIKGYMNKKEKGTNHTYAKP.

The protein belongs to the RnpA family. As to quaternary structure, consists of a catalytic RNA component (M1 or rnpB) and a protein subunit.

The catalysed reaction is Endonucleolytic cleavage of RNA, removing 5'-extranucleotides from tRNA precursor.. In terms of biological role, RNaseP catalyzes the removal of the 5'-leader sequence from pre-tRNA to produce the mature 5'-terminus. It can also cleave other RNA substrates such as 4.5S RNA. The protein component plays an auxiliary but essential role in vivo by binding to the 5'-leader sequence and broadening the substrate specificity of the ribozyme. The chain is Ribonuclease P protein component from Helicobacter acinonychis (strain Sheeba).